A 488-amino-acid chain; its full sequence is Diacylglycerol O-acyltransferase 1 (488 aa).

Positions 1–57 (MGDRGSSRRRRTGSRPSSHGGGGPAAAEEEVRDAAAGPDVGAAGDAPAPAPNKDGDA) are disordered. Residues 1–83 (MGDRGSSRRR…SLFSSDSGFS (83 aa)) lie on the Cytoplasmic side of the membrane. The interval 1-91 (MGDRGSSRRR…FSNYRGILNW (91 aa)) is involved in homomerization. Phosphoserine is present on residues serine 17 and serine 18. The segment covering 34 to 47 (AAAGPDVGAAGDAP) has biased composition (low complexity). Residues 84 to 118 (NYRGILNWCVVMLILSNARLFLENLIKYGILVDPI) traverse the membrane as a helical segment. At 119–130 (QVVSLFLKDPYS) the chain is on the lumenal side. Residues 119 to 130 (QVVSLFLKDPYS) are extracellular loop 1 (EL1). The helical transmembrane segment at 131–156 (WPAPCLVIAANVFAVAAFQVEKRLAV) threads the bilayer. The interval 131–488 (WPAPCLVIAA…LNYEAPAAEA (358 aa)) is MBOAT fold. The Cytoplasmic portion of the chain corresponds to 157-161 (GALTE). The chain crosses the membrane as a helical span at residues 162-184 (QAGLLLHVANLATILCFPAAVVL). The Lumenal segment spans residues 185–191 (LVESITP). The helical transmembrane segment at 192–223 (VGSLLALMAHTILFLKLFSYRDVNSWCRRARA) threads the bilayer. The Cytoplasmic segment spans residues 224–273 (KAASAGKKASSAAAPHTVSYPDNLTYRDLYYFLFAPTLCYELNFPRSPRI). An intracellular loop 1 (IL1) region spans residues 224–276 (KAASAGKKASSAAAPHTVSYPDNLTYRDLYYFLFAPTLCYELNFPRSPRIRKR). The helical transmembrane segment at 274-308 (RKRFLLRRILEMLFFTQLQVGLIQQWMVPTIQNSM) threads the bilayer. Over 309–315 (KPFKDMD) the chain is Lumenal. A helical membrane pass occupies residues 316 to 353 (YSRIIERLLKLAVPNHLIWLIFFYWLFHSCLNAVAELM). The Cytoplasmic segment spans residues 354 to 399 (QFGDREFYRDWWNSESVTYFWQNWNIPVHKWCIRHFYKPMLRRGSS). An intracellular loop 2 (IL2) region spans residues 354 to 399 (QFGDREFYRDWWNSESVTYFWQNWNIPVHKWCIRHFYKPMLRRGSS). The FYXDWWN motif motif lies at 360-366 (FYRDWWN). An acyl-CoA-binding positions include 374 to 382 (WQNWNIPVH), tyrosine 390, and arginine 404. Residues 380-394 (PVHKWCIRHFYKPML) form an amphipathic helix (AH) region. A helical membrane pass occupies residues 400–420 (KWMARTGVFLASAFFHEYLVS). Residue histidine 415 is part of the active site. Residues 421–428 (VPLRMFRL) lie on the Lumenal side of the membrane. Residues 429–447 (WAFTGMMAQIPLAWFVGRF) traverse the membrane as a helical segment. Over 448–449 (FQ) the chain is Cytoplasmic. A helical transmembrane segment spans residues 450–481 (GNYGNAAVWLSLIIGQPIAVLMYVHDYYVLNY). Tyrosine 477 lines the an acyl-CoA pocket. Over 482–488 (EAPAAEA) the chain is Lumenal.

This sequence belongs to the membrane-bound acyltransferase family. Sterol o-acyltransferase subfamily. Homodimer or homotetramer; both forms have similar enzymatic activities.

Its subcellular location is the endoplasmic reticulum membrane. The catalysed reaction is an acyl-CoA + a 1,2-diacyl-sn-glycerol = a triacyl-sn-glycerol + CoA. It catalyses the reaction all-trans-retinol + an acyl-CoA = an all-trans-retinyl ester + CoA. It carries out the reaction 2-(9Z-octadecenoyl)-glycerol + (9Z)-octadecenoyl-CoA = 1,2-di-(9Z-octadecenoyl)-sn-glycerol + CoA. The enzyme catalyses 1,2-di-(9Z-octadecenoyl)-sn-glycerol + (9Z)-octadecenoyl-CoA = 1,2,3-tri-(9Z-octadecenoyl)-glycerol + CoA. The catalysed reaction is all-trans-retinol + hexadecanoyl-CoA = all-trans-retinyl hexadecanoate + CoA. It catalyses the reaction 1-O-(9Z-octadecenyl)-glycerol + (9Z)-octadecenoyl-CoA = 1-O-(9Z-octadecyl)-3-(9Z-octadecenoyl)-glycerol + CoA. It carries out the reaction 1-O-(9Z-octadecyl)-3-(9Z-octadecenoyl)-glycerol + (9Z)-octadecenoyl-CoA = 1-O-(9Z-octadecenyl)-2,3-di-(9Z-octadecenoyl)glycerol + CoA. The enzyme catalyses 1-(9Z-octadecenoyl)-glycerol + (9Z)-octadecenoyl-CoA = 1,2-di-(9Z-octadecenoyl)-glycerol + CoA. The catalysed reaction is 1,2-di-(9Z-octadecenoyl)-glycerol + (9Z)-octadecenoate + H(+) = 1,2,3-tri-(9Z-octadecenoyl)-glycerol + H2O. It catalyses the reaction 1-octadecanoyl-2-(5Z,8Z,11Z,14Z-eicosatetraenoyl)-sn-glycerol + (9Z)-octadecenoyl-CoA = 1-octadecanoyl-2-(5Z,8Z,11Z,14Z)-eicosatetraenoyl-3-(9Z)-octadecenoyl-sn-glycerol + CoA. It carries out the reaction hexadecane-1,2-diol + 2 hexadecanoyl-CoA = 1,2-O,O-dihexadecanoyl-1,2-hexadecanediol + 2 CoA. The enzyme catalyses hexadecane-1,2-diol + hexadecanoyl-CoA = 2-hydroxyhexadecyl hexadecanoate + CoA. The catalysed reaction is 2-(9Z-octadecenoyl)-glycerol + hexadecanoyl-CoA = 1-hexadecanoyl-2-(9Z-octadecenoyl)-sn-glycerol + CoA. It catalyses the reaction 1,2-di-(9Z-octadecenoyl)-sn-glycerol + hexadecanoyl-CoA = 1,2-di-(9Z)-octadecenoyl-3-hexadecanoyl-sn-glycerol + CoA. It carries out the reaction hexadecan-1-ol + hexadecanoyl-CoA = hexadecanyl hexadecanoate + CoA. The enzyme catalyses 13-cis-retinol + hexadecanoyl-CoA = 13-cis-retinyl hexadecanoate + CoA. The catalysed reaction is 1,3-di-(9Z-octadecenoyl)-glycerol + (9Z)-octadecenoyl-CoA = 1,2,3-tri-(9Z-octadecenoyl)-glycerol + CoA. It catalyses the reaction 2,3-di-(9Z)-octadecenoyl-sn-glycerol + (9Z)-octadecenoyl-CoA = 1,2,3-tri-(9Z-octadecenoyl)-glycerol + CoA. It participates in lipid metabolism; glycerolipid metabolism. Its activity is regulated as follows. XP620 is a selective DGAT1 inhibitor. Catalyzes the terminal and only committed step in triacylglycerol synthesis by using diacylglycerol and fatty acyl CoA as substrates. Highly expressed in epithelial cells of the small intestine and its activity is essential for the absorption of dietary fats. In liver, plays a role in esterifying exogenous fatty acids to glycerol, and is required to synthesize fat for storage. Also present in female mammary glands, where it produces fat in the milk. May be involved in VLDL (very low density lipoprotein) assembly. In contrast to DGAT2 it is not essential for survival. Functions as the major acyl-CoA retinol acyltransferase (ARAT) in the skin, where it acts to maintain retinoid homeostasis and prevent retinoid toxicity leading to skin and hair disorders. Exhibits additional acyltransferase activities, includin acyl CoA:monoacylglycerol acyltransferase (MGAT), wax monoester and wax diester synthases. Also able to use 1-monoalkylglycerol (1-MAkG) as an acyl acceptor for the synthesis of monoalkyl-monoacylglycerol (MAMAG). The sequence is that of Diacylglycerol O-acyltransferase 1 from Homo sapiens (Human).